A 367-amino-acid chain; its full sequence is Mitogen-activated protein kinase 12 (367 aa).

One can recognise a Protein kinase domain in the interval 27-311 (YQDLQPVGSG…AAEALTHPYF (285 aa)). ATP is bound by residues 33 to 41 (VGSGAYGAV) and K56. The active-site Proton acceptor is D153. The residue at position 183 (T183) is a Phosphothreonine. A TXY motif is present at residues 183–185 (TGY). Y185 is modified (phosphotyrosine).

This sequence belongs to the protein kinase superfamily. CMGC Ser/Thr protein kinase family. MAP kinase subfamily. In terms of assembly, monomer. Interacts with the PDZ domain of the syntrophin SNTA1. Interacts with SH3BP5, LIN7C, SCRIB and SYNJ2BP. Interacts with PTPN4; this interaction induces the activation of PTPN4 phosphatase activity. Mg(2+) is required as a cofactor. In terms of processing, dually phosphorylated on Thr-183 and Tyr-185 by MAP2K3/MKK3 and MAP2K6/MKK6, which activates the enzyme. Ubiquitinated. Ubiquitination leads to degradation by the proteasome pathway. As to expression, highly expressed in skeletal muscle. Also expressed in the heart, particularly in cardiac myocytes, lung, thymus and testes.

The protein localises to the cytoplasm. The protein resides in the nucleus. Its subcellular location is the mitochondrion. It catalyses the reaction L-seryl-[protein] + ATP = O-phospho-L-seryl-[protein] + ADP + H(+). The enzyme catalyses L-threonyl-[protein] + ATP = O-phospho-L-threonyl-[protein] + ADP + H(+). Its activity is regulated as follows. Activated by phosphorylation on threonine and tyrosine. MAP2K3/MKK3 and MAP2K6/MKK6 are both essential for the activation of MAPK12 induced by environmental stress, whereas MAP2K6/MKK6 is the major MAPK12 activator in response to TNF-alpha. In terms of biological role, serine/threonine kinase which acts as an essential component of the MAP kinase signal transduction pathway. MAPK12 is one of the four p38 MAPKs which play an important role in the cascades of cellular responses evoked by extracellular stimuli such as pro-inflammatory cytokines or physical stress leading to direct activation of transcription factors such as ELK1 and ATF2. Accordingly, p38 MAPKs phosphorylate a broad range of proteins and it has been estimated that they may have approximately 200 to 300 substrates each. Some of the targets are downstream kinases such as MAPKAPK2, which are activated through phosphorylation and further phosphorylate additional targets. Plays a role in myoblast differentiation and also in the down-regulation of cyclin D1 in response to hypoxia in adrenal cells suggesting MAPK12 may inhibit cell proliferation while promoting differentiation. Phosphorylates DLG1. Following osmotic shock, MAPK12 in the cell nucleus increases its association with nuclear DLG1, thereby causing dissociation of DLG1-SFPQ complexes. This function is independent of its catalytic activity and could affect mRNA processing and/or gene transcription to aid cell adaptation to osmolarity changes in the environment. Regulates UV-induced checkpoint signaling and repair of UV-induced DNA damage and G2 arrest after gamma-radiation exposure. MAPK12 is involved in the regulation of SLC2A1 expression and basal glucose uptake in L6 myotubes; and negatively regulates SLC2A4 expression and contraction-mediated glucose uptake in adult skeletal muscle. C-Jun (JUN) phosphorylation is stimulated by MAPK14 and inhibited by MAPK12, leading to a distinct AP-1 regulation. MAPK12 is required for the normal kinetochore localization of PLK1, prevents chromosomal instability and supports mitotic cell viability. MAPK12-signaling is also positively regulating the expansion of transient amplifying myogenic precursor cells during muscle growth and regeneration. This chain is Mitogen-activated protein kinase 12 (Mapk12), found in Mus musculus (Mouse).